The sequence spans 156 residues: Phosphopantetheine adenylyltransferase (156 aa).

Thr10 lines the substrate pocket. ATP-binding positions include 10–11 (TF) and His18. Substrate is bound by residues Lys42, Leu74, and Arg88. Residues 89-91 (GIR), Glu99, and 124-130 (WAFISSS) each bind ATP.

This sequence belongs to the bacterial CoaD family. Homohexamer. Requires Mg(2+) as cofactor.

The protein localises to the cytoplasm. The enzyme catalyses (R)-4'-phosphopantetheine + ATP + H(+) = 3'-dephospho-CoA + diphosphate. Its pathway is cofactor biosynthesis; coenzyme A biosynthesis; CoA from (R)-pantothenate: step 4/5. Its function is as follows. Reversibly transfers an adenylyl group from ATP to 4'-phosphopantetheine, yielding dephospho-CoA (dPCoA) and pyrophosphate. The sequence is that of Phosphopantetheine adenylyltransferase from Hamiltonella defensa subsp. Acyrthosiphon pisum (strain 5AT).